The chain runs to 188 residues: MGTGFHGTTILSIRKDDKVVMIGDGQVTMGNAVVVKSTAQKVKRLSNGKIISGFAGSTADAFTLFERLESKLEAHPGQLLRACVELAKDWRTDKFLRRLEAMMIVADARGTLILNGAGDVIEPEDSVAAIGSGGNYALAAAKALIVHASDLDAFQIAEAAMKIAAKICVFTNENFTVEVIDCASKECS.

Residue Thr8 is part of the active site. Residues Ala165, Cys168, and Thr171 each contribute to the Na(+) site.

It belongs to the peptidase T1B family. HslV subfamily. A double ring-shaped homohexamer of HslV is capped on each side by a ring-shaped HslU homohexamer. The assembly of the HslU/HslV complex is dependent on binding of ATP.

The protein localises to the cytoplasm. It catalyses the reaction ATP-dependent cleavage of peptide bonds with broad specificity.. With respect to regulation, allosterically activated by HslU binding. In terms of biological role, protease subunit of a proteasome-like degradation complex believed to be a general protein degrading machinery. The polypeptide is ATP-dependent protease subunit HslV (Neorickettsia sennetsu (strain ATCC VR-367 / Miyayama) (Ehrlichia sennetsu)).